We begin with the raw amino-acid sequence, 1053 residues long: Serine/threonine-protein phosphatase 6 regulatory ankyrin repeat subunit A (1053 aa).

ANK repeat units lie at residues 40–69 (EKRT…RVNA), 73–102 (KWLT…DVNA), 106–135 (NWQT…NVNV), 139–168 (AGRT…NINA), 172–201 (KDRR…EVTC), 205–234 (KSYT…DMNE), 238–267 (YGNT…NVNQ), 271–301 (KGFT…DVNM), 305–334 (DGKT…VIDC), 338–367 (NGNT…DTAK), 371–400 (HGMF…DIDT), 404–433 (FGRT…DFNK), 437–466 (FGRS…SVND), 470–500 (RGCT…NPGI), 504–534 (QGYN…DVLM), 549–578 (ATIS…DLDV), 582–611 (SGRT…SILV), 616–645 (LKRT…PQNA), 652–681 (NGQT…NVDA), 685–714 (WGRT…KCLL), 718–747 (RGRT…SVDA), 755–786 (HGYT…KIDG), 788–817 (AFSP…SIVN), 822–851 (KGRT…QVNS), 855–885 (TGKT…DLTL), 889–918 (SKNT…DRNL), and 925–954 (ALQT…SVLA). 2 positions are modified to phosphoserine: Ser-1007 and Ser-1011.

Protein phosphatase 6 (PP6) holoenzyme is proposed to be a heterotrimeric complex formed by the catalytic subunit, a SAPS domain-containing subunit (PP6R) and an ankyrin repeat-domain containing regulatory subunit (ARS). Interacts with PPP1C and HNRPK. Interacts with PPP6C, PPP6R1 and PPP6R3. In terms of processing, ubiquitinated by the ECS(RAB40C) complex leading to its degradation and decreased PP6 activity. In terms of tissue distribution, widely expressed (at protein level).

The protein resides in the nucleus. It is found in the nucleoplasm. The protein localises to the cytoplasm. Its subcellular location is the cytosol. It localises to the cell projection. The protein resides in the lamellipodium. Functionally, putative regulatory subunit of protein phosphatase 6 (PP6) that may be involved in the recognition of phosphoprotein substrates. Involved in the PP6-mediated dephosphorylation of NFKBIE opposing its degradation in response to TNF-alpha. Selectively inhibits the phosphatase activity of PPP1C. Targets PPP1C to modulate HNRPK phosphorylation. Involved in the PP6-mediated dephosphorylation of MOB1 and induced focal adhesion assembly during cell migration. The chain is Serine/threonine-protein phosphatase 6 regulatory ankyrin repeat subunit A (Ankrd28) from Mus musculus (Mouse).